A 466-amino-acid chain; its full sequence is Amidase (466 aa).

Catalysis depends on charge relay system residues Lys-79 and Ser-148. Positions 128-152 (YGRITPKSRNPRDPGRTPGGSSGGS) are disordered. Residue Ser-172 is the Acyl-ester intermediate of the active site.

The protein belongs to the amidase family.

It carries out the reaction a monocarboxylic acid amide + H2O = a monocarboxylate + NH4(+). The sequence is that of Amidase from Pseudomonas putida (Arthrobacter siderocapsulatus).